A 327-amino-acid chain; its full sequence is GTPase Obg (327 aa).

Residues Met-1–Leu-159 form the Obg domain. Residues Ala-160–Ile-327 enclose the OBG-type G domain. ATP is bound by residues Gly-166 to Ser-173, Phe-191 to Ile-195, Asp-213 to Gly-216, Asn-280 to Glu-283, and Ser-309 to Ser-311. 2 residues coordinate Mg(2+): Ser-173 and Thr-193.

Belongs to the TRAFAC class OBG-HflX-like GTPase superfamily. OBG GTPase family. Monomer. Mg(2+) serves as cofactor.

It is found in the cytoplasm. Functionally, an essential GTPase which binds GTP, GDP and possibly (p)ppGpp with moderate affinity, with high nucleotide exchange rates and a fairly low GTP hydrolysis rate. Plays a role in control of the cell cycle, stress response, ribosome biogenesis and in those bacteria that undergo differentiation, in morphogenesis control. This Prochlorococcus marinus (strain AS9601) protein is GTPase Obg.